Reading from the N-terminus, the 1427-residue chain is MHQRHPRARCPPLCVAGILACGFLLGCWGPSHFQQSCLQALEPQAVSSYLSPGAPLKGRPPSPGFQRQRQRQRRAAGGILHLELLVAVGPDVFQAHQEDTERYVLTNLNIGAELLRDPSLGAQFRVHLVKMVILTEPEGAPNITANLTSSLLSVCGWSQTINPEDDTDPGHADLVLYITRFDLELPDGNRQVRGVTQLGGACSPTWSCLITEDTGFDLGVTIAHEIGHSFGLEHDGAPGSGCGPSGHVMASDGAAPRAGLAWSPCSRRQLLSLLSAGRARCVWDPPRPQPGSAGHPPDAQPGLYYSANEQCRVAFGPKAVACTFAREHLDMCQALSCHTDPLDQSSCSRLLVPLLDGTECGVEKWCSKGRCRSLVELTPIAAVHGRWSSWGPRSPCSRSCGGGVVTRRRQCNNPRPAFGGRACVGADLQAEMCNTQACEKTQLEFMSQQCARTDGQPLRSSPGGASFYHWGAAVPHSQGDALCRHMCRAIGESFIMKRGDSFLDGTRCMPSGPREDGTLSLCVSGSCRTFGCDGRMDSQQVWDRCQVCGGDNSTCSPRKGSFTAGRAREYVTFLTVTPNLTSVYIANHRPLFTHLAVRIGGRYVVAGKMSISPNTTYPSLLEDGRVEYRVALTEDRLPRLEEIRIWGPLQEDADIQVYRRYGEEYGNLTRPDITFTYFQPKPRQAWVWAAVRGPCSVSCGAGLRWVNYSCLDQARKELVETVQCQGSQQPPAWPEACVLEPCPPYWAVGDFGPCSASCGGGLRERPVRCVEAQGSLLKTLPPARCRAGAQQPAVALETCNPQPCPARWEVSEPSSCTSAGGAGLALENETCVPGADGLEAPVTEGPGSVDEKLPAPEPCVGMSCPPGWGHLDATSAGEKAPSPWGSIRTGAQAAHVWTPAAGSCSVSCGRGLMELRFLCMDSALRVPVQEELCGLASKPGSRREVCQAVPCPARWQYKLAACSVSCGRGVVRRILYCARAHGEDDGEEILLDTQCQGLPRPEPQEACSLEPCPPRWKVMSLGPCSASCGLGTARRSVACVQLDQGQDVEVDEAACAALVRPEASVPCLIADCTYRWHVGTWMECSVSCGDGIQRRRDTCLGPQAQAPVPADFCQHLPKPVTVRGCWAGPCVGQGTPSLVPHEEAAAPGRTTATPAGASLEWSQARGLLFSPAPQPRRLLPGPQENSVQSSACGRQHLEPTGTIDMRGPGQADCAVAIGRPLGEVVTLRVLESSLNCSAGDMLLLWGRLTWRKMCRKLLDMTFSSKTNTLVVRQRCGRPGGGVLLRYGSQLAPETFYRECDMQLFGPWGEIVSPSLSPATSNAGGCRLFINVAPHARIAIHALATNMGAGTEGANASYILIRDTHSLRTTAFHGQQVLYWESESSQAEMEFSEGFLKAQASLRGQYWTLQSWVPEMQDPQSWKGKEGT.

The signal sequence occupies residues 1–29; the sequence is MHQRHPRARCPPLCVAGILACGFLLGCWG. The propeptide occupies 30-74; that stretch reads PSHFQQSCLQALEPQAVSSYLSPGAPLKGRPPSPGFQRQRQRQRR. The segment at 51-70 is disordered; that stretch reads SPGAPLKGRPPSPGFQRQRQ. In terms of domain architecture, Peptidase M12B spans 80 to 286; sequence LHLELLVAVG…GRARCVWDPP (207 aa). Glu-83 is a binding site for Ca(2+). N-linked (GlcNAc...) asparagine glycosylation is found at Asn-142 and Asn-146. 3 disulfide bridges follow: Cys-155–Cys-208, Cys-202–Cys-281, and Cys-242–Cys-265. Ca(2+)-binding residues include Asp-173, Asp-182, Glu-184, Asp-187, and Glu-212. His-224 is a binding site for Zn(2+). The active site involves Glu-225. Positions 228 and 234 each coordinate Zn(2+). Positions 281 and 284 each coordinate Ca(2+). The region spanning 287-383 is the Disintegrin domain; that stretch reads RPQPGSAGHP…LVELTPIAAV (97 aa). Disulfide bonds link Cys-311–Cys-337, Cys-322–Cys-347, Cys-332–Cys-366, and Cys-360–Cys-371. A TSP type-1 1 domain is found at 384 to 439; it reads HGRWSSWGPRSPCSRSCGGGVVTRRRQCNNPRPAFGGRACVGADLQAEMCNTQACE. Trp-387 is a glycosylation site (C-linked (Man) tryptophan). 8 disulfide bridges follow: Cys-396-Cys-433, Cys-400-Cys-438, Cys-411-Cys-423, Cys-450-Cys-487, Cys-483-Cys-522, Cys-508-Cys-527, Cys-532-Cys-548, and Cys-545-Cys-555. Ser-399 is a glycosylation site (O-linked (Fuc...) serine). Positions 440–556 are cysteine-rich; it reads KTQLEFMSQQ…VCGGDNSTCS (117 aa). The Cell attachment site signature appears at 498-500; sequence RGD. N-linked (GlcNAc...) asparagine glycosylation is found at Asn-552, Asn-579, and Asn-614. The segment at 556–685 is spacer; sequence SPRKGSFTAG…TYFQPKPRQA (130 aa). The N-linked (GlcNAc...) (complex) asparagine glycan is linked to Asn-667. 7 consecutive TSP type-1 domains span residues 682–730, 742–805, 808–859, 896–950, 951–1011, 1012–1068, and 1072–1131; these read PRQA…SQQP, CPPY…QPCP, WEVS…PEPC, VWTP…QAVP, CPAR…SLEP, CPPR…VPCL, and CTYR…GPCV. An O-linked (Fuc...) serine glycan is attached at Ser-698. Asn-707 is a glycosylation site (N-linked (GlcNAc...) (complex) asparagine). O-linked (Fuc...) serine glycosylation is present at Ser-757. A glycan (N-linked (GlcNAc...) asparagine) is linked at Asn-828. O-linked (Fuc...) serine glycans are attached at residues Ser-907, Ser-965, Ser-1027, and Ser-1087. 2 CUB domains span residues 1192–1298 and 1299–1427; these read CGRQ…FYRE and CDMQ…KEGT. Residues Asn-1235 and Asn-1354 are each glycosylated (N-linked (GlcNAc...) asparagine).

Zn(2+) is required as a cofactor. The cofactor is Ca(2+). Post-translationally, glycosylated. O-fucosylated by POFUT2 on a serine or a threonine residue found within the consensus sequence C1-X(2)-(S/T)-C2-G of the TSP type-1 repeat domains where C1 and C2 are the first and second cysteine residue of the repeat, respectively. Fucosylated repeats can then be further glycosylated by the addition of a beta-1,3-glucose residue by the glucosyltransferase, B3GALTL. Fucosylation mediates the efficient secretion of ADAMTS13. May also be C-glycosylated on tryptophan residues within the consensus sequence W-X-X-W of the TPRs, and also N-glycosylated. These other glycosylations can also facilitate secretion. The precursor is processed by a furin endopeptidase which cleaves off the pro-domain. As to expression, plasma. Expressed primarily in liver.

The protein resides in the secreted. The catalysed reaction is The enzyme cleaves the von Willebrand factor at bond 842-Tyr-|-Met-843 within the A2 domain.. With respect to regulation, zinc and calcium ions cooperatively modulate enzyme activity. The cleavage of the pro-domain is not required for protease activity. Dependence on calcium for proteolytic activity is mediated by the high affinity site. Cleaves the vWF multimers in plasma into smaller forms thereby controlling vWF-mediated platelet thrombus formation. This Homo sapiens (Human) protein is A disintegrin and metalloproteinase with thrombospondin motifs 13 (ADAMTS13).